A 108-amino-acid chain; its full sequence is Class I hydrophobin hgfII (108 aa).

An N-terminal signal peptide occupies residues 1-19 (MFSRIAAVSFLALPLLAAA). Disulfide bonds link Cys-28–Cys-89, Cys-35–Cys-83, Cys-36–Cys-69, and Cys-90–Cys-103. The N-linked (GlcNAc...) asparagine glycan is linked to Asn-92.

This sequence belongs to the fungal hydrophobin family. As to quaternary structure, self-assembles to form functional amyloid fibrils called rodlets with a diameter of 15-30 nm. Self-assembly into fibrillar rodlets occurs spontaneously at hydrophobic:hydrophilic interfaces and the rodlets further associate laterally to form amphipathic monolayers. In terms of tissue distribution, highky expressed in hyphae cultured in liquid medium.

It is found in the secreted. The protein localises to the cell wall. In terms of biological role, aerial growth, conidiation, and dispersal of filamentous fungi in the environment rely upon a capability of their secreting small amphipathic proteins called hydrophobins (HPBs) with low sequence identity. Class I can self-assemble into an outermost layer of rodlet bundles on aerial cell surfaces, conferring cellular hydrophobicity that supports fungal growth, development and dispersal; whereas Class II form highly ordered films at water-air interfaces through intermolecular interactions but contribute nothing to the rodlet structure. HgfII is a class I hydrophobin that is involved in cell surface hydrophobicity and might play a key role during the growth and development of hyphae cultured in liquid medium. In Grifola frondosa (Maitake), this protein is Class I hydrophobin hgfII.